The primary structure comprises 352 residues: Phosphate acetyltransferase (352 aa).

Belongs to the phosphate acetyltransferase and butyryltransferase family.

Its subcellular location is the cytoplasm. The enzyme catalyses acetyl-CoA + phosphate = acetyl phosphate + CoA. It functions in the pathway metabolic intermediate biosynthesis; acetyl-CoA biosynthesis; acetyl-CoA from acetate: step 2/2. The polypeptide is Phosphate acetyltransferase (pta) (Borreliella burgdorferi (strain ATCC 35210 / DSM 4680 / CIP 102532 / B31) (Borrelia burgdorferi)).